The primary structure comprises 140 residues: Putative nickel-responsive regulator (140 aa).

Residues H76, H87, H89, and C95 each contribute to the Ni(2+) site.

Belongs to the transcriptional regulatory CopG/NikR family. It depends on Ni(2+) as a cofactor.

In terms of biological role, transcriptional regulator. The protein is Putative nickel-responsive regulator of Rhodopseudomonas palustris (strain BisB5).